Here is a 357-residue protein sequence, read N- to C-terminus: MAIKKVGILGATGTVGQRFITLLSDHPEFKIAVLGASARSAGKPYAVATKWKQSIAMPKEISQMSVKACDPKEFSECDIVFSGLDADFAGEIEKSFRDANLVIVSNAKNYRREPTVPLVVPTVNTDHLDVIKYQRQENKLDRGCIITNSNCSTAAVVVPLKALQDAFGPIAQTNVVSMQAISGAGYPGVSSLDILDNIVPFIGGEEEKIEWETRKILGSVNSTISGYELTDNVVSAQCNRVPVIDGHLMCISVKFAKTSPTPDQVREVLANYVSEPQKLGCYSAPKQAIYVFDDSTPDRPQPRLDRNNENGYAVSVGRIRSDSIFDIKFVSLVHNTVLGAAGAGILNAEVAVKKGLM.

Positions 12, 13, 14, 15, 37, 40, 84, and 85 each coordinate NADP(+). Cys-151 acts as the Acyl-thioester intermediate in catalysis. Gly-183 provides a ligand contact to NADP(+). The Proton acceptor role is filled by His-247. Ser-323 carries the post-translational modification Phosphoserine. NADP(+) is bound at residue Asn-335.

This sequence belongs to the aspartate-semialdehyde dehydrogenase family.

The protein localises to the cytoplasm. It is found in the cytosol. It localises to the nucleus. It carries out the reaction L-aspartate 4-semialdehyde + phosphate + NADP(+) = 4-phospho-L-aspartate + NADPH + H(+). It functions in the pathway amino-acid biosynthesis; L-methionine biosynthesis via de novo pathway; L-homoserine from L-aspartate: step 2/3. Its pathway is amino-acid biosynthesis; L-threonine biosynthesis; L-threonine from L-aspartate: step 2/5. Its function is as follows. Catalyzes the NADPH-dependent formation of L-aspartate 4-semialdehyde (L-ASA) by the reductive dephosphorylation of 4-phospho-L-aspartate. Mediates the second step in the biosynthesis of amino acids that derive from aspartate (the aspartate family of amino acids), including methioinine and threonine, the latter of which is a precursor to isoleucine. In Schizosaccharomyces pombe (strain 972 / ATCC 24843) (Fission yeast), this protein is Aspartate-semialdehyde dehydrogenase.